The chain runs to 165 residues: PTS system glucose-specific EIIA component (165 aa).

A PTS EIIA type-1 domain is found at 33–137 (DPVFAGRMMG…STITPIVITN (105 aa)). Zn(2+)-binding residues include histidine 70 and histidine 85. Histidine 85 (tele-phosphohistidine intermediate; for EIIA activity) is an active-site residue. A Phosphohistidine; by HPr modification is found at histidine 85.

Heterodimer with glycerol kinase (glpk). Zn(2+) is required as a cofactor.

The protein localises to the cytoplasm. The phosphoenolpyruvate-dependent sugar phosphotransferase system (sugar PTS), a major carbohydrate active transport system, catalyzes the phosphorylation of incoming sugar substrates concomitantly with their translocation across the cell membrane. The enzyme II complex composed of PtsG and Crr is involved in glucose transport. The chain is PTS system glucose-specific EIIA component (crr) from Bacillus anthracis.